Consider the following 72-residue polypeptide: UPF0270 protein ETA_31870 (72 aa).

It belongs to the UPF0270 family.

This Erwinia tasmaniensis (strain DSM 17950 / CFBP 7177 / CIP 109463 / NCPPB 4357 / Et1/99) protein is UPF0270 protein ETA_31870.